A 167-amino-acid polypeptide reads, in one-letter code: Shikimate kinase (167 aa).

12–17 (GSGKTT) is an ATP binding site. T16 is a binding site for Mg(2+). Positions 34, 58, and 80 each coordinate substrate. R117 is an ATP binding site. R135 serves as a coordination point for substrate. ATP is bound at residue R152.

It belongs to the shikimate kinase family. In terms of assembly, monomer. Mg(2+) is required as a cofactor.

It is found in the cytoplasm. It catalyses the reaction shikimate + ATP = 3-phosphoshikimate + ADP + H(+). It functions in the pathway metabolic intermediate biosynthesis; chorismate biosynthesis; chorismate from D-erythrose 4-phosphate and phosphoenolpyruvate: step 5/7. Its function is as follows. Catalyzes the specific phosphorylation of the 3-hydroxyl group of shikimic acid using ATP as a cosubstrate. The protein is Shikimate kinase of Salinispora arenicola (strain CNS-205).